Here is a 183-residue protein sequence, read N- to C-terminus: Peptide deformylase (183 aa).

Fe cation-binding residues include C110 and H153. The active site involves E154. H157 contributes to the Fe cation binding site.

The protein belongs to the polypeptide deformylase family. Fe(2+) serves as cofactor.

It catalyses the reaction N-terminal N-formyl-L-methionyl-[peptide] + H2O = N-terminal L-methionyl-[peptide] + formate. Its function is as follows. Removes the formyl group from the N-terminal Met of newly synthesized proteins. Requires at least a dipeptide for an efficient rate of reaction. N-terminal L-methionine is a prerequisite for activity but the enzyme has broad specificity at other positions. In Oceanobacillus iheyensis (strain DSM 14371 / CIP 107618 / JCM 11309 / KCTC 3954 / HTE831), this protein is Peptide deformylase.